A 262-amino-acid polypeptide reads, in one-letter code: Proenkephalin-A-A (262 aa).

Positions 1–24 (MGLEARHCCMFLLVFASLSVEIRA) are cleaved as a signal peptide. 3 disulfide bridges follow: Cys-26/Cys-48, Cys-30/Cys-52, and Cys-33/Cys-65. 5 propeptides span residues 110–131 (MDEL…LAKN), 139–177 (EYDS…GEIN), 190–201 (STDLEDETSGIQ), 211–221 (VGRPEWWEDYQ), and 229–253 (TRFT…PDME).

The protein belongs to the opioid neuropeptide precursor family. Post-translationally, the N-terminal domain contains 6 conserved cysteines thought to be involved in disulfide bonding and/or processing.

The protein resides in the secreted. Functionally, enkephalin neuropeptides compete with and mimic the effects of opiate drugs. They play a role in a number of physiologic functions, including pain perception and responses to stress. In Xenopus laevis (African clawed frog), this protein is Proenkephalin-A-A (penk-a).